The chain runs to 571 residues: MRTSHYLLSTLKETPADAEIVSHQLMLRAGMIRKLASGLYDWMPTGVRVLRKIEKIVREEMDNAGSLEISMPVVQPADLWQESGRWEQYGPELLRFTDRGERPFVLGPTHEEVVTDIVRNEITSYKQLPLNLYQIQTKFRDEVRPRFGVMRSREFIMKDAYSFHISQESLQETYDRMYQAYSNIFTRIGLDFRPVLADTGSIGGSASHEFQVLADSGEDDIVFSTASDYAANIELAEAVMPATPRSPATEELRLVDTPNAKTIAELVEQFNLPIEKTVKTLIVHATEESGHKLVALLVRGDHELNEIKAEKCSIVASPLVFATEEEIRQAVNAGPGSLGPINLPLPIIIDRAVSVMSDFGAGANIDGKHYFGINWERDLPLAEMADIRNVVEGDPSPDGKGTLLIKRGIEVGHIFQLGKKYSEALKATVQNEEGHNQVVTMGCYGIGITRIVAAAIEQNHDARGIIWPDAIAPFQVAILPMNMHRSYRVKEVAEKLYADLRAQGIDVLFDDRKERPGVMFADMELIGVPHTIVIGDRNLDNEQVEYKARRSDDKSLVNVNDVVAFIKEQLV.

It belongs to the class-II aminoacyl-tRNA synthetase family. ProS type 1 subfamily. As to quaternary structure, homodimer.

It localises to the cytoplasm. The catalysed reaction is tRNA(Pro) + L-proline + ATP = L-prolyl-tRNA(Pro) + AMP + diphosphate. Its function is as follows. Catalyzes the attachment of proline to tRNA(Pro) in a two-step reaction: proline is first activated by ATP to form Pro-AMP and then transferred to the acceptor end of tRNA(Pro). As ProRS can inadvertently accommodate and process non-cognate amino acids such as alanine and cysteine, to avoid such errors it has two additional distinct editing activities against alanine. One activity is designated as 'pretransfer' editing and involves the tRNA(Pro)-independent hydrolysis of activated Ala-AMP. The other activity is designated 'posttransfer' editing and involves deacylation of mischarged Ala-tRNA(Pro). The misacylated Cys-tRNA(Pro) is not edited by ProRS. The protein is Proline--tRNA ligase of Proteus mirabilis (strain HI4320).